We begin with the raw amino-acid sequence, 333 residues long: 4-hydroxy-3-methylbut-2-enyl diphosphate reductase (333 aa).

Position 20 (Cys20) interacts with [4Fe-4S] cluster. (2E)-4-hydroxy-3-methylbut-2-enyl diphosphate is bound by residues His49 and His82. Residues His49 and His82 each contribute to the dimethylallyl diphosphate site. 2 residues coordinate isopentenyl diphosphate: His49 and His82. Position 104 (Cys104) interacts with [4Fe-4S] cluster. His132 contributes to the (2E)-4-hydroxy-3-methylbut-2-enyl diphosphate binding site. His132 contributes to the dimethylallyl diphosphate binding site. An isopentenyl diphosphate-binding site is contributed by His132. The active-site Proton donor is Glu134. Position 172 (Thr172) interacts with (2E)-4-hydroxy-3-methylbut-2-enyl diphosphate. Cys202 contributes to the [4Fe-4S] cluster binding site. (2E)-4-hydroxy-3-methylbut-2-enyl diphosphate-binding residues include Ser230, Ser231, Asn232, and Ser274. Residues Ser230, Ser231, Asn232, and Ser274 each coordinate dimethylallyl diphosphate. The isopentenyl diphosphate site is built by Ser230, Ser231, Asn232, and Ser274.

It belongs to the IspH family. [4Fe-4S] cluster is required as a cofactor.

It catalyses the reaction isopentenyl diphosphate + 2 oxidized [2Fe-2S]-[ferredoxin] + H2O = (2E)-4-hydroxy-3-methylbut-2-enyl diphosphate + 2 reduced [2Fe-2S]-[ferredoxin] + 2 H(+). The enzyme catalyses dimethylallyl diphosphate + 2 oxidized [2Fe-2S]-[ferredoxin] + H2O = (2E)-4-hydroxy-3-methylbut-2-enyl diphosphate + 2 reduced [2Fe-2S]-[ferredoxin] + 2 H(+). The protein operates within isoprenoid biosynthesis; dimethylallyl diphosphate biosynthesis; dimethylallyl diphosphate from (2E)-4-hydroxy-3-methylbutenyl diphosphate: step 1/1. It participates in isoprenoid biosynthesis; isopentenyl diphosphate biosynthesis via DXP pathway; isopentenyl diphosphate from 1-deoxy-D-xylulose 5-phosphate: step 6/6. Catalyzes the conversion of 1-hydroxy-2-methyl-2-(E)-butenyl 4-diphosphate (HMBPP) into a mixture of isopentenyl diphosphate (IPP) and dimethylallyl diphosphate (DMAPP). Acts in the terminal step of the DOXP/MEP pathway for isoprenoid precursor biosynthesis. The polypeptide is 4-hydroxy-3-methylbut-2-enyl diphosphate reductase (Polaromonas sp. (strain JS666 / ATCC BAA-500)).